A 268-amino-acid polypeptide reads, in one-letter code: ELL-associated factor 1 (268 aa).

The segment at 106–268 is disordered; the sequence is IQVKKTRAEG…LSESGSDSDD (163 aa). Positions 128 to 154 are enriched in pro residues; sequence TRPPQTSQPPPPPPPMPFRAPTKPPVG. Ser-165 carries the phosphoserine modification. Basic and acidic residues predominate over residues 171 to 181; sequence DDIKRELRAEV. The interval 182-262 is necessary for transactivation activity; that stretch reads DIIEQMSSSS…LRNDLQLSES (81 aa). A compositionally biased stretch (low complexity) spans 188 to 213; it reads SSSSGSSSSDSESSSGSDDDSSSSGG. Residues 238–268 show a composition bias toward polar residues; the sequence is NGTSRPQGSNQLMNTLRNDLQLSESGSDSDD.

The protein belongs to the EAF family. Component of the super elongation complex (SEC), at least composed of EAF1, EAF2, CDK9, MLLT3/AF9, AFF (AFF1 or AFF4), the P-TEFb complex and ELL (ELL, ELL2 or ELL3). Interacts with ELL and ELL2. As to expression, strongly expressed in heart, brain, placenta, lung, liver, skeletal muscle, kidney, pancreas, spleen, prostate, testis, small intestine and colon. Poorly expressed in thymus.

Its subcellular location is the nucleus speckle. It is found in the nucleus. It localises to the cajal body. Its function is as follows. Acts as a transcriptional transactivator of ELL and ELL2 elongation activities. This is ELL-associated factor 1 (EAF1) from Homo sapiens (Human).